A 28-amino-acid polypeptide reads, in one-letter code: Phospholipase A2 2 (28 aa).

The protein belongs to the phospholipase A2 family. Group I subfamily. It depends on Ca(2+) as a cofactor. As to expression, expressed by the venom gland.

The protein resides in the secreted. The enzyme catalyses a 1,2-diacyl-sn-glycero-3-phosphocholine + H2O = a 1-acyl-sn-glycero-3-phosphocholine + a fatty acid + H(+). Functionally, snake venom phospholipase A2 (PLA2) that inhibits neuromuscular transmission by blocking acetylcholine release from the nerve termini. PLA2 catalyzes the calcium-dependent hydrolysis of the 2-acyl groups in 3-sn-phosphoglycerides. This Micrurus nigrocinctus (Central American coral snake) protein is Phospholipase A2 2.